Reading from the N-terminus, the 183-residue chain is Intermembrane phospholipid transport system binding protein MlaD (183 aa).

At 1–7 (MQTKKNE) the chain is on the cytoplasmic side. Residues 8–28 (IWVGIFLLAALLAALFVCLKA) form a helical; Signal-anchor for type II membrane protein membrane-spanning segment. The Periplasmic segment spans residues 29 to 183 (ANVTSIRTEP…ETTEPVGTTK (155 aa)). The tract at residues 39-116 (TYTLYATFDN…LGEQYLALNV (78 aa)) is MCE/MlaD. A disordered region spans residues 155–183 (KGDDNKNSGDAPAAAPGNNETTEPVGTTK). Positions 172–183 (NNETTEPVGTTK) are enriched in polar residues.

It belongs to the MlaD family. The complex is composed of two ATP-binding proteins (MlaF), two transmembrane proteins (MlaE), two cytoplasmic solute-binding proteins (MlaB) and six periplasmic solute-binding proteins (MlaD).

Its subcellular location is the cell inner membrane. Part of the ABC transporter complex MlaFEDB, which is involved in a phospholipid transport pathway that maintains lipid asymmetry in the outer membrane by retrograde trafficking of phospholipids from the outer membrane to the inner membrane. MlaD functions in substrate binding with strong affinity for phospholipids and modulates ATP hydrolytic activity of the complex. In Escherichia coli O157:H7, this protein is Intermembrane phospholipid transport system binding protein MlaD.